The following is a 617-amino-acid chain: MPALRSRTTTHGRNMAGARALWRATGMTDDDFGKPIVAVANSFTEFVPGHVHLRNLGSLVAGAVAEAGGVAREFNTIAVDDGIAMGHGGMLYSLPSRELIADSVEYMVNAHCADALVCISNCDKITPGMLLAALRLNIPTVFVSGGAMESGNAVISGGTARSRLDLITAMSAAVNPDVSDGDLSTIERSACPTCGSCSGMFTANSMNCLTEAIGLSLPGNGSTLATAAARRELFVEAGRLVVDLARRYYEKDDEAVLPRSIATAAAFRNAFAVDVAMGGSTNTVLHLLAAAVEAGVDVTLADIDQISRTVPCLCKVAPSSTRYYMEDVHRAGGIPAILGELDRAGLLDPDPHTVHSASLREFLDRWDVRGPSPSPDAIELFHAAPGGVRTIEPFSSTNRWDTLDTDARDGCIRSVEHAYSAEGGLAVLFGNLAVEGAVVKTAGVDEGQWTFRGPALVVESQEEAVDAILTGRVKAGNVIIVRYEGPRGGPGMQEMLYPTAFLKGRGLGPKCALITDGRFSGGSSGLSIGHVSPEAAHGGTIALVRDGDIIEIDIPARRLELVVSDEELASRRAALEAAGGYRPTGRERPVSMALRAYAAMATSASTGAARDVGLLGG.

Residue Asp-81 participates in Mg(2+) binding. Cys-122 contributes to the [2Fe-2S] cluster binding site. Positions 123 and 124 each coordinate Mg(2+). Position 124 is an N6-carboxylysine (Lys-124). Cys-197 is a [2Fe-2S] cluster binding site. Glu-494 is a Mg(2+) binding site. Ser-520 functions as the Proton acceptor in the catalytic mechanism.

Belongs to the IlvD/Edd family. Homodimer. [2Fe-2S] cluster serves as cofactor. Mg(2+) is required as a cofactor.

It carries out the reaction (2R)-2,3-dihydroxy-3-methylbutanoate = 3-methyl-2-oxobutanoate + H2O. The enzyme catalyses (2R,3R)-2,3-dihydroxy-3-methylpentanoate = (S)-3-methyl-2-oxopentanoate + H2O. It participates in amino-acid biosynthesis; L-isoleucine biosynthesis; L-isoleucine from 2-oxobutanoate: step 3/4. It functions in the pathway amino-acid biosynthesis; L-valine biosynthesis; L-valine from pyruvate: step 3/4. Its function is as follows. Functions in the biosynthesis of branched-chain amino acids. Catalyzes the dehydration of (2R,3R)-2,3-dihydroxy-3-methylpentanoate (2,3-dihydroxy-3-methylvalerate) into 2-oxo-3-methylpentanoate (2-oxo-3-methylvalerate) and of (2R)-2,3-dihydroxy-3-methylbutanoate (2,3-dihydroxyisovalerate) into 2-oxo-3-methylbutanoate (2-oxoisovalerate), the penultimate precursor to L-isoleucine and L-valine, respectively. The polypeptide is Dihydroxy-acid dehydratase (Frankia casuarinae (strain DSM 45818 / CECT 9043 / HFP020203 / CcI3)).